Consider the following 432-residue polypeptide: Neuropeptide FF receptor 1 (432 aa).

The Extracellular segment spans residues 1-43; sequence MEAEPSQPPNGSWPLGQNGSDVETSMATSLTFSSYYQHSSPVA. Asparagine 10 and asparagine 18 each carry an N-linked (GlcNAc...) asparagine glycan. Residues 44–64 form a helical membrane-spanning segment; that stretch reads AMFIAAYVLIFLLCMVGNTLV. Residues 65–80 are Cytoplasmic-facing; it reads CFIVLKNRHMRTVTNM. The helical transmembrane segment at 81–101 threads the bilayer; sequence FILNLAVSDLLVGIFCMPTTL. Over 102-117 the chain is Extracellular; it reads VDNLITGWPFDNATCK. An N-linked (GlcNAc...) asparagine glycan is attached at asparagine 113. A disulfide bridge connects residues cysteine 116 and cysteine 203. Residues 118-138 form a helical membrane-spanning segment; it reads MSGLVQGMSVSASVFTLVAIA. Residues 139-158 are Cytoplasmic-facing; that stretch reads VERFRCIVHPFREKLTLRKA. A helical membrane pass occupies residues 159–179; that stretch reads LFTIAVIWALALLIMCPSAVT. The Extracellular portion of the chain corresponds to 180-214; the sequence is LTVTREEHHFMLDARNRSYPLYSCWEAWPEKGMRK. Residue asparagine 195 is glycosylated (N-linked (GlcNAc...) asparagine). The helical transmembrane segment at 215-235 threads the bilayer; sequence VYTAVLFAHIYLVPLALIVVM. The Cytoplasmic portion of the chain corresponds to 236-273; sequence YVRIARKLCQAPGPARDTEEAVAEGGRTSRRRARVVHM. Residues 274–294 form a helical membrane-spanning segment; that stretch reads LVMVALFFTLSWLPLWVLLLL. Residues 295–309 are Extracellular-facing; the sequence is IDYGELSELQLHLLS. The chain crosses the membrane as a helical span at residues 310 to 330; the sequence is VYAFPLAHWLAFFHSSANPII. The Cytoplasmic portion of the chain corresponds to 331 to 432; sequence YGYFNENFRR…MPLTIPAWNI (102 aa). The segment covering 380–406 has biased composition (low complexity); it reads PSDSGLPSESGPSSGVPGPGRLPLRNG. A disordered region spans residues 380-422; that stretch reads PSDSGLPSESGPSSGVPGPGRLPLRNGRVAHQDGPGEGPGCNH.

The protein belongs to the G-protein coupled receptor 1 family. Expressed at high levels in the hypothalamus. Moderate levels found in the midbrain, thalamus, medulla oblongata, testis, eye, whole brain, cerebral cortex, striatum, hippocampus, cerebellum, optic nerve, placenta, spinal cord, pituitary gland and ovary.

It localises to the cell membrane. Receptor for NPAF (A-18-F-amide) and NPFF (F-8-F-amide) neuropeptides, also known as morphine-modulating peptides. Can also be activated by a variety of naturally occurring or synthetic FMRF-amide like ligands. This receptor mediates its action by association with G proteins that activate a phosphatidylinositol-calcium second messenger system. This chain is Neuropeptide FF receptor 1 (Npffr1), found in Rattus norvegicus (Rat).